We begin with the raw amino-acid sequence, 146 residues long: Dual specificity phosphatase Cdc25 (146 aa).

In terms of domain architecture, Rhodanese spans 34–135; sequence RRPNIAIIDV…WEASGKPVCR (102 aa). 45–48 is a binding site for substrate; sequence DEER. His-53 serves as a coordination point for Zn(2+). A substrate-binding site is contributed by 68–71; that stretch reads KISH. Cys-86 functions as the Cysteine persulfide intermediate in the catalytic mechanism. 90–92 provides a ligand contact to substrate; that stretch reads QVR. Residues Cys-134, Cys-136, and Cys-141 each coordinate Zn(2+).

Belongs to the MPI phosphatase family. As to expression, expressed in roots and at lower levels in shoots (at protein level). Expressed in leaves, stems and flowers.

Its subcellular location is the nucleus. It catalyses the reaction O-phospho-L-tyrosyl-[protein] + H2O = L-tyrosyl-[protein] + phosphate. The catalysed reaction is [glutaredoxin]-dithiol + arsenate + glutathione + H(+) = glutathionyl-S-S-[glutaredoxin] + arsenite + H2O. Inhibited by NSC95397. Functionally, tyrosine protein phosphatase that dephosphorylates CDK complex and activate its kinase activity in vitro. In terms of biological role, arsenate reductase that plays a major role in the reduction of arsenate to arsenite and arsenic retention in roots. Has an in vitro and in vivo arsenate reductase activity. Plays no role in arsenic metabolism. This Arabidopsis thaliana (Mouse-ear cress) protein is Dual specificity phosphatase Cdc25.